Here is a 739-residue protein sequence, read N- to C-terminus: Probable beta-glucosidase L (739 aa).

The signal sequence occupies residues 1–17 (MQNLFLSLLAAAVTVHA). The N-linked (GlcNAc...) asparagine glycan is linked to Asn-224. The active site involves Asp-252. An N-linked (GlcNAc...) asparagine glycan is attached at Asn-398.

This sequence belongs to the glycosyl hydrolase 3 family.

It localises to the secreted. The enzyme catalyses Hydrolysis of terminal, non-reducing beta-D-glucosyl residues with release of beta-D-glucose.. Its pathway is glycan metabolism; cellulose degradation. Functionally, beta-glucosidases are one of a number of cellulolytic enzymes involved in the degradation of cellulosic biomass. Catalyzes the last step releasing glucose from the inhibitory cellobiose. The protein is Probable beta-glucosidase L (bglL) of Neosartorya fischeri (strain ATCC 1020 / DSM 3700 / CBS 544.65 / FGSC A1164 / JCM 1740 / NRRL 181 / WB 181) (Aspergillus fischerianus).